Reading from the N-terminus, the 456-residue chain is MQHLLKSLPKVDTLLAHNELKMFQKSTLLPLIQSHLSLLRENICSNTLSPKELESALNEIIPVIKKKAIEATKPTLTRVINATGVVIHTNLGRSVLSPQILDEITPFLRSYHTLEYDLAKGKRSERYTHTKQILCEMFGCEDALLVNNNAAAVLLILNTFAAHKEVIISRGELVEIGGSFRIPEVMKSASSILCEVGATNKTHLKDYENAINEQSAMIMKVHQSNFKQIGFVKQCHIKEIIHLAQKHHLIDYFDLGSGHIGALPLADEPSVREICKYKPSLLSFSGDKLLGGPQVGIIIGKSQLIAQLKHNQLLRALRVDKFSILALQATLKAYQNKEYHKIPTLAMLAFTPKELESKAKNLKKRILASSIASELEVEVIPLHSLAGGGSVPHLSFDSFGISLQAKHLQVQDFEFALRALGLISCIQGEKILLDVRTLLEGDEERIMEILGEVLSS.

Lysine 288 is subject to N6-(pyridoxal phosphate)lysine.

Belongs to the SelA family. It depends on pyridoxal 5'-phosphate as a cofactor.

It is found in the cytoplasm. It catalyses the reaction L-seryl-tRNA(Sec) + selenophosphate + H(+) = L-selenocysteinyl-tRNA(Sec) + phosphate. Its pathway is aminoacyl-tRNA biosynthesis; selenocysteinyl-tRNA(Sec) biosynthesis; selenocysteinyl-tRNA(Sec) from L-seryl-tRNA(Sec) (bacterial route): step 1/1. Converts seryl-tRNA(Sec) to selenocysteinyl-tRNA(Sec) required for selenoprotein biosynthesis. The protein is L-seryl-tRNA(Sec) selenium transferase of Helicobacter hepaticus (strain ATCC 51449 / 3B1).